The sequence spans 259 residues: 5'-nucleotidase SurE (259 aa).

Positions 11, 12, 42, and 99 each coordinate a divalent metal cation.

This sequence belongs to the SurE nucleotidase family. Requires a divalent metal cation as cofactor.

The protein resides in the cytoplasm. It catalyses the reaction a ribonucleoside 5'-phosphate + H2O = a ribonucleoside + phosphate. Its function is as follows. Nucleotidase that shows phosphatase activity on nucleoside 5'-monophosphates. The protein is 5'-nucleotidase SurE of Cytophaga hutchinsonii (strain ATCC 33406 / DSM 1761 / CIP 103989 / NBRC 15051 / NCIMB 9469 / D465).